Reading from the N-terminus, the 391-residue chain is 8-amino-7-oxononanoate synthase (391 aa).

R19 serves as a coordination point for substrate. Position 106-107 (106-107 (GY)) interacts with pyridoxal 5'-phosphate. Residue H131 coordinates substrate. S178, H206, and T234 together coordinate pyridoxal 5'-phosphate. K237 is modified (N6-(pyridoxal phosphate)lysine). T353 serves as a coordination point for substrate.

Belongs to the class-II pyridoxal-phosphate-dependent aminotransferase family. BioF subfamily. In terms of assembly, homodimer. Requires pyridoxal 5'-phosphate as cofactor.

It catalyses the reaction 6-carboxyhexanoyl-[ACP] + L-alanine + H(+) = (8S)-8-amino-7-oxononanoate + holo-[ACP] + CO2. It functions in the pathway cofactor biosynthesis; biotin biosynthesis. Functionally, catalyzes the decarboxylative condensation of pimeloyl-[acyl-carrier protein] and L-alanine to produce 8-amino-7-oxononanoate (AON), [acyl-carrier protein], and carbon dioxide. This chain is 8-amino-7-oxononanoate synthase, found in Geobacter metallireducens (strain ATCC 53774 / DSM 7210 / GS-15).